The sequence spans 70 residues: Alpha-elapitoxin-Ast2a (70 aa).

5 disulfides stabilise this stretch: cysteine 3–cysteine 20, cysteine 13–cysteine 41, cysteine 26–cysteine 30, cysteine 45–cysteine 56, and cysteine 57–cysteine 62. The residue at position 70 (serine 70) is a Serine amide.

It belongs to the three-finger toxin family. Long-chain subfamily. Type II alpha-neurotoxin sub-subfamily. Expressed by the venom gland.

It is found in the secreted. Its function is as follows. Binds with high affinity to muscular (alpha-1/CHRNA1) and neuronal (alpha-7/CHRNA7) nicotinic acetylcholine receptor (nAChR) and inhibits acetylcholine from binding to the receptor, thereby impairing neuromuscular and neuronal transmission. The sequence is that of Alpha-elapitoxin-Ast2a from Hydrophis stokesii (Stokes's sea snake).